The following is a 1223-amino-acid chain: Glycerophosphocholine phosphodiesterase GDE1 (1223 aa).

Residues 1–213 (MKFGKTFANH…GTNQQMSTMK (213 aa)) enclose the SPX domain. Over residues 43–59 (HNKNSYDEGRPPTKMRD) the composition is skewed to basic and acidic residues. Residues 43–64 (HNKNSYDEGRPPTKMRDSSNSA) are disordered. 6 ANK repeats span residues 427–456 (YKRTPLHYSCQYGLSEVTKLIIKLMKEWNI), 472–502 (ESLTPLHLCVLGAHPKTTEVLLQSLDPNVKL), 504–533 (SSSLLHLATEWNNYPLLHVLLSSKRFDINY), 538–567 (LHETPLYLACRLNFFEAAVCLLYNGADLEI), 572–601 (FGWTAIFVAAAEGFTDIVKLLIANNANFDI), and 605–634 (GGWTPMEHAVLRGHLHIADMVQIRDELVTH). Phosphoserine is present on S653. Residues 872–1217 (TRVIGHRGLG…DSVLAIRRGL (346 aa)) enclose the GP-PDE domain. Positions 911, 913, and 926 each coordinate a divalent metal cation. S983 is modified (phosphoserine).

Belongs to the GDE1 family. Requires a divalent metal cation as cofactor.

Its subcellular location is the cytoplasm. It carries out the reaction sn-glycerol 3-phosphocholine + H2O = sn-glycerol 3-phosphate + choline + H(+). The catalysed reaction is sn-glycero-3-phospho-1D-myo-inositol + H2O = myo-inositol + sn-glycerol 3-phosphate + H(+). Functionally, glycerophosphocholine glycerophosphodiesterase responsible for the hydrolysis of intracellular glycerophosphocholine into glycerol-phosphate and choline. The choline is used for phosphatidyl-choline synthesis. Required for utilization of glycerophosphocholine as phosphate source. May also use glycerophosphoinositol as substrate in vivo. The polypeptide is Glycerophosphocholine phosphodiesterase GDE1 (Saccharomyces cerevisiae (strain ATCC 204508 / S288c) (Baker's yeast)).